A 240-amino-acid chain; its full sequence is MADS-box protein SVP (240 aa).

The region spanning 3–57 is the MADS-box domain; it reads REKIQIRKIDNATARQVTFSKRRRGLFKKAEELSVLCDADVALIIFSSTGKLFEF. One can recognise a K-box domain in the interval 87–180; it reads QLVENSDHAR…GTQLTEENER (94 aa). Residues 202–240 form a disordered region; sequence VYEEGQSSESITNAGNSTGAPVDSESSDTSLRLGLPYGG. The segment covering 206-220 has biased composition (polar residues); the sequence is GQSSESITNAGNSTG.

Forms a heterodimer with AP1 and SVP. Interacts with the SEU-LUG corepressor complex when complexed to AP1. Interacts with AGL15. Interacts with AGL16. In terms of tissue distribution, detected in roots and leaves. Expressed at very low levels in flowers and siliques. Present in floral meristems.

It is found in the nucleus. In terms of biological role, transcription repressor that inhibit floral transition in the autonomous flowering pathway, independent of photoperiod and temperature. Acts in a dosage-dependent manner. Together with AGL24 and AP1, controls the identity of the floral meristem and regulates expression of class B, C and E genes. Promotes EFM expression to suppress flowering. The polypeptide is MADS-box protein SVP (Arabidopsis thaliana (Mouse-ear cress)).